We begin with the raw amino-acid sequence, 148 residues long: ATP synthase epsilon chain (148 aa).

It belongs to the ATPase epsilon chain family. F-type ATPases have 2 components, CF(1) - the catalytic core - and CF(0) - the membrane proton channel. CF(1) has five subunits: alpha(3), beta(3), gamma(1), delta(1), epsilon(1). CF(0) has three main subunits: a, b and c.

It localises to the cell inner membrane. In terms of biological role, produces ATP from ADP in the presence of a proton gradient across the membrane. In Paracoccus denitrificans (strain Pd 1222), this protein is ATP synthase epsilon chain.